A 549-amino-acid polypeptide reads, in one-letter code: Threonine--tRNA ligase catalytic subunit (549 aa).

The segment at Asp-142–Pro-437 is catalytic. Cys-235, His-286, and His-414 together coordinate Zn(2+).

The protein belongs to the class-II aminoacyl-tRNA synthetase family. As to quaternary structure, homodimer. Probably interacts with its editing subunit. Zn(2+) is required as a cofactor.

The protein resides in the cytoplasm. The enzyme catalyses tRNA(Thr) + L-threonine + ATP = L-threonyl-tRNA(Thr) + AMP + diphosphate + H(+). Catalyzes the attachment of threonine to tRNA(Thr) in a two-step reaction: L-threonine is first activated by ATP to form Thr-AMP and then transferred to the acceptor end of tRNA(Thr). Also activates L-serine and transfers it to tRNA(Thr) but cannot deacylate incorrectly charged amino acid; unlike most archaea the editing function is found in a freestanding protein. This chain is Threonine--tRNA ligase catalytic subunit, found in Sulfolobus acidocaldarius (strain ATCC 33909 / DSM 639 / JCM 8929 / NBRC 15157 / NCIMB 11770).